A 538-amino-acid chain; its full sequence is Growth factor receptor-bound protein 14 (538 aa).

The disordered stretch occupies residues 1-20 (MTTSLQDGQSAAGRAGAQDS). An N-acetylthreonine modification is found at Thr2. In terms of domain architecture, Ras-associating spans 104 to 190 (KKQVIKVYSE…NKLYLRKNYA (87 aa)). The region spanning 232–340 (YPEIHGFLHA…WVTAIRLLKD (109 aa)) is the PH domain. Residues Ser370 and Ser373 each carry the phosphoserine modification. The 97-residue stretch at 437-533 (WFHHRISRDE…VLPCKLKHYC (97 aa)) folds into the SH2 domain.

This sequence belongs to the GRB7/10/14 family. Interacts with the cytoplasmic domain of the autophosphorylated insulin receptor, through the SH2 domain. Interacts with GRB14 (via BPS domain); this interaction protects the tyrosines in the activation loop on INSR from dephosphorylation. Binds to the ankyrin repeat region of TNKS2 via its N-terminus. Interacts with activated NRAS. Interacts (via SH2 domain) with TEK/TIE2 (tyrosine phosphorylated). Phosphorylated on serine residues. Phosphorylated on tyrosine residues by TEK/TIE2.

It is found in the cytoplasm. The protein resides in the endosome membrane. Functionally, adapter protein which modulates coupling of cell surface receptor kinases with specific signaling pathways. Binds to, and suppresses signals from, the activated insulin receptor (INSR). Potent inhibitor of insulin-stimulated MAPK3 phosphorylation. Plays a critical role regulating PDPK1 membrane translocation in response to insulin stimulation and serves as an adapter protein to recruit PDPK1 to activated insulin receptor, thus promoting PKB/AKT1 phosphorylation and transduction of the insulin signal. This is Growth factor receptor-bound protein 14 (Grb14) from Mus musculus (Mouse).